Reading from the N-terminus, the 406-residue chain is Tyrosine--tRNA ligase (406 aa).

Y35 lines the L-tyrosine pocket. A 'HIGH' region motif is present at residues A40–H49. L-tyrosine-binding residues include Y166 and Q170. The short motif at K226–S230 is the 'KMSKS' region element. K229 is a binding site for ATP. In terms of domain architecture, S4 RNA-binding spans I341 to I405.

The protein belongs to the class-I aminoacyl-tRNA synthetase family. TyrS type 1 subfamily. As to quaternary structure, homodimer.

The protein resides in the cytoplasm. The catalysed reaction is tRNA(Tyr) + L-tyrosine + ATP = L-tyrosyl-tRNA(Tyr) + AMP + diphosphate + H(+). Functionally, catalyzes the attachment of tyrosine to tRNA(Tyr) in a two-step reaction: tyrosine is first activated by ATP to form Tyr-AMP and then transferred to the acceptor end of tRNA(Tyr). The protein is Tyrosine--tRNA ligase of Borrelia hermsii (strain HS1 / DAH).